The sequence spans 478 residues: ATP synthase subunit beta (478 aa).

An ATP-binding site is contributed by 160–167 (GGAGVGKT).

It belongs to the ATPase alpha/beta chains family. In terms of assembly, F-type ATPases have 2 components, CF(1) - the catalytic core - and CF(0) - the membrane proton channel. CF(1) has five subunits: alpha(3), beta(3), gamma(1), delta(1), epsilon(1). CF(0) has three main subunits: a(1), b(2) and c(9-12). The alpha and beta chains form an alternating ring which encloses part of the gamma chain. CF(1) is attached to CF(0) by a central stalk formed by the gamma and epsilon chains, while a peripheral stalk is formed by the delta and b chains.

It is found in the cell inner membrane. The enzyme catalyses ATP + H2O + 4 H(+)(in) = ADP + phosphate + 5 H(+)(out). Produces ATP from ADP in the presence of a proton gradient across the membrane. The catalytic sites are hosted primarily by the beta subunits. The sequence is that of ATP synthase subunit beta from Orientia tsutsugamushi (strain Boryong) (Rickettsia tsutsugamushi).